Reading from the N-terminus, the 176-residue chain is Large ribosomal subunit protein uL6 (176 aa).

Belongs to the universal ribosomal protein uL6 family. As to quaternary structure, part of the 50S ribosomal subunit.

In terms of biological role, this protein binds to the 23S rRNA, and is important in its secondary structure. It is located near the subunit interface in the base of the L7/L12 stalk, and near the tRNA binding site of the peptidyltransferase center. This Dechloromonas aromatica (strain RCB) protein is Large ribosomal subunit protein uL6.